The chain runs to 201 residues: 3-isopropylmalate dehydratase small subunit (201 aa).

Belongs to the LeuD family. LeuD type 1 subfamily. Heterodimer of LeuC and LeuD.

It catalyses the reaction (2R,3S)-3-isopropylmalate = (2S)-2-isopropylmalate. The protein operates within amino-acid biosynthesis; L-leucine biosynthesis; L-leucine from 3-methyl-2-oxobutanoate: step 2/4. Catalyzes the isomerization between 2-isopropylmalate and 3-isopropylmalate, via the formation of 2-isopropylmaleate. This Salmonella paratyphi A (strain ATCC 9150 / SARB42) protein is 3-isopropylmalate dehydratase small subunit.